We begin with the raw amino-acid sequence, 535 residues long: Prolyl 4-hydroxylase subunit alpha-2 (535 aa).

The signal sequence occupies residues 1–21 (MKLWVSALLMAWFGVLSCVQA). A glycan (N-linked (GlcNAc...) asparagine) is linked at Asn115. Residues 207–240 (SQVLDYLSYAVFQLGDLHRALELTRRLLSLDPSH) form a TPR repeat. Residue Asn264 is glycosylated (N-linked (GlcNAc...) asparagine). Positions 412–520 (TAELLQVANY…KWVSNKWFHE (109 aa)) constitute a Fe2OG dioxygenase domain. Fe cation-binding residues include His430 and Asp432. Lys480 is modified (N6-succinyllysine). Residue His501 coordinates Fe cation. Lys511 provides a ligand contact to 2-oxoglutarate.

Belongs to the P4HA family. As to quaternary structure, heterotetramer of two alpha-2 chains and two beta chains (P4HB) (the beta chain is the multi-functional PDI), where P4HB plays the role of a structural subunit; this tetramer catalyzes the formation of 4-hydroxyproline in collagen. Fe(2+) serves as cofactor. The cofactor is L-ascorbate. In terms of tissue distribution, expressed in the heart, placenta, lung and pancreas.

It is found in the endoplasmic reticulum lumen. The catalysed reaction is L-prolyl-[collagen] + 2-oxoglutarate + O2 = trans-4-hydroxy-L-prolyl-[collagen] + succinate + CO2. Inhibited by poly(L-proline) only at very high concentrations. Catalyzes the post-translational formation of 4-hydroxyproline in -Xaa-Pro-Gly- sequences in collagens and other proteins. The sequence is that of Prolyl 4-hydroxylase subunit alpha-2 (P4HA2) from Homo sapiens (Human).